A 239-amino-acid chain; its full sequence is Uridylate kinase (239 aa).

ATP is bound at residue 10–13 (KISG). The involved in allosteric activation by GTP stretch occupies residues 18 to 23 (GESGYG). G52 is a UMP binding site. ATP contacts are provided by G53 and R57. UMP-binding positions include D72 and 133–140 (TGNPYFTT). ATP contacts are provided by T160, Y166, and D169.

Belongs to the UMP kinase family. In terms of assembly, homohexamer.

Its subcellular location is the cytoplasm. It carries out the reaction UMP + ATP = UDP + ADP. Its pathway is pyrimidine metabolism; CTP biosynthesis via de novo pathway; UDP from UMP (UMPK route): step 1/1. Its activity is regulated as follows. Allosterically activated by GTP. Inhibited by UTP. Functionally, catalyzes the reversible phosphorylation of UMP to UDP. The sequence is that of Uridylate kinase from Chlorobaculum tepidum (strain ATCC 49652 / DSM 12025 / NBRC 103806 / TLS) (Chlorobium tepidum).